A 92-amino-acid chain; its full sequence is MASQQEKKQLDERAKKGETVVPGGTGGKSFEAQQHLAEGRSRGGQTRKEQLGTEGYQQMGRKGGLSTGDKPGGEHAEEEGVEIDESKFRTKT.

Basic and acidic residues-rich tracts occupy residues 1–18 (MASQQEKKQLDERAKKGE) and 37–51 (AEGRSRGGQTRKEQL). Positions 1 to 92 (MASQQEKKQL…IDESKFRTKT (92 aa)) are disordered.

This sequence belongs to the small hydrophilic plant seed protein family. In terms of tissue distribution, present only in nearly dry and dry seeds.

It is thought to provide protection for the cytoplasm during the desiccation stage of embryo development. This Arabidopsis thaliana (Mouse-ear cress) protein is Em-like protein GEA6 (EM6).